A 227-amino-acid chain; its full sequence is Cytochrome c oxidase subunit 2 (227 aa).

Residues M1–S14 are Mitochondrial intermembrane-facing. A helical membrane pass occupies residues P15–M45. Over L46 to Q59 the chain is Mitochondrial matrix. Residues E60–M87 traverse the membrane as a helical segment. The Mitochondrial intermembrane segment spans residues D88–V227. H161, C196, E198, C200, H204, and M207 together coordinate Cu cation. E198 is a binding site for Mg(2+). Y218 is subject to Phosphotyrosine.

The protein belongs to the cytochrome c oxidase subunit 2 family. Component of the cytochrome c oxidase (complex IV, CIV), a multisubunit enzyme composed of 14 subunits. The complex is composed of a catalytic core of 3 subunits MT-CO1, MT-CO2 and MT-CO3, encoded in the mitochondrial DNA, and 11 supernumerary subunits COX4I, COX5A, COX5B, COX6A, COX6B, COX6C, COX7A, COX7B, COX7C, COX8 and NDUFA4, which are encoded in the nuclear genome. The complex exists as a monomer or a dimer and forms supercomplexes (SCs) in the inner mitochondrial membrane with NADH-ubiquinone oxidoreductase (complex I, CI) and ubiquinol-cytochrome c oxidoreductase (cytochrome b-c1 complex, complex III, CIII), resulting in different assemblies (supercomplex SCI(1)III(2)IV(1) and megacomplex MCI(2)III(2)IV(2)). Found in a complex with TMEM177, COA6, COX18, COX20, SCO1 and SCO2. Interacts with TMEM177 in a COX20-dependent manner. Interacts with COX20. Interacts with COX16. Cu cation is required as a cofactor.

The protein resides in the mitochondrion inner membrane. It carries out the reaction 4 Fe(II)-[cytochrome c] + O2 + 8 H(+)(in) = 4 Fe(III)-[cytochrome c] + 2 H2O + 4 H(+)(out). Functionally, component of the cytochrome c oxidase, the last enzyme in the mitochondrial electron transport chain which drives oxidative phosphorylation. The respiratory chain contains 3 multisubunit complexes succinate dehydrogenase (complex II, CII), ubiquinol-cytochrome c oxidoreductase (cytochrome b-c1 complex, complex III, CIII) and cytochrome c oxidase (complex IV, CIV), that cooperate to transfer electrons derived from NADH and succinate to molecular oxygen, creating an electrochemical gradient over the inner membrane that drives transmembrane transport and the ATP synthase. Cytochrome c oxidase is the component of the respiratory chain that catalyzes the reduction of oxygen to water. Electrons originating from reduced cytochrome c in the intermembrane space (IMS) are transferred via the dinuclear copper A center (CU(A)) of subunit 2 and heme A of subunit 1 to the active site in subunit 1, a binuclear center (BNC) formed by heme A3 and copper B (CU(B)). The BNC reduces molecular oxygen to 2 water molecules using 4 electrons from cytochrome c in the IMS and 4 protons from the mitochondrial matrix. The polypeptide is Cytochrome c oxidase subunit 2 (MT-CO2) (Cerdocyon thous (Crab-eating fox)).